A 370-amino-acid chain; its full sequence is Homospermidine synthase (370 aa).

It belongs to the deoxyhypusine synthase family. As to quaternary structure, homotetramer. Requires NAD(+) as cofactor.

The enzyme catalyses putrescine + spermidine = sym-homospermidine + propane-1,3-diamine. It functions in the pathway alkaloid biosynthesis; pyrrolizidine alkaloid biosynthesis. Catalyzes the transfer of an aminobutyl unit from spermidine onto putrescine. The resulting polyamine homospermidine is a precursor in the biosynthesis of pyrrolizidine alkaloids. The protein is Homospermidine synthase (HSS1) of Senecio vulgaris (Common groundsel).